The sequence spans 1212 residues: Nucleolar protein 6 (1212 aa).

Disordered regions lie at residues 1–72 (MGKI…PVSI) and 1156–1212 (KREQ…KSLS). Positions 1197-1212 (LKRKSLIKSRPLKSLS) are enriched in basic residues.

Belongs to the NRAP family. Part of the small subunit (SSU) processome, composed of more than 70 proteins and the RNA chaperone small nucleolar RNA (snoRNA) U3.

Its subcellular location is the nucleus. The protein localises to the nucleolus. It is found in the chromosome. Functionally, part of the small subunit (SSU) processome, first precursor of the small eukaryotic ribosomal subunit. During the assembly of the SSU processome in the nucleolus, many ribosome biogenesis factors, an RNA chaperone and ribosomal proteins associate with the nascent pre-rRNA and work in concert to generate RNA folding, modifications, rearrangements and cleavage as well as targeted degradation of pre-ribosomal RNA by the RNA exosome. This Drosophila pseudoobscura pseudoobscura (Fruit fly) protein is Nucleolar protein 6.